The sequence spans 227 residues: Homeobox protein HD-10 (227 aa).

Positions Phe30 to Thr89 form a DNA-binding region, homeobox. The tract at residues Leu88–Lys115 is disordered. Residues Lys92–Thr102 are compositionally biased toward polar residues.

It localises to the nucleus. The protein is Homeobox protein HD-10 (HD-10) of Encephalitozoon cuniculi (strain GB-M1) (Microsporidian parasite).